Consider the following 632-residue polypeptide: Arginine--tRNA ligase (632 aa).

Residues 129–139 carry the 'HIGH' region motif; that stretch reads ANPVHPLHVGS.

This sequence belongs to the class-I aminoacyl-tRNA synthetase family.

The protein localises to the cytoplasm. It catalyses the reaction tRNA(Arg) + L-arginine + ATP = L-arginyl-tRNA(Arg) + AMP + diphosphate. This chain is Arginine--tRNA ligase, found in Korarchaeum cryptofilum (strain OPF8).